The sequence spans 362 residues: Peptide chain release factor 1 (362 aa).

Q237 carries the N5-methylglutamine modification.

Belongs to the prokaryotic/mitochondrial release factor family. In terms of processing, methylated by PrmC. Methylation increases the termination efficiency of RF1.

Its subcellular location is the cytoplasm. Its function is as follows. Peptide chain release factor 1 directs the termination of translation in response to the peptide chain termination codons UAG and UAA. The sequence is that of Peptide chain release factor 1 from Vibrio vulnificus (strain CMCP6).